We begin with the raw amino-acid sequence, 605 residues long: UvrABC system protein C (605 aa).

The GIY-YIG domain occupies 14-92 (QSCGVYKMVG…IKSLKPLYNI (79 aa)). Positions 202 to 237 (KEVKEQLLFTMRKCSSEENYELAAIYRDRVKFLEQI) constitute a UVR domain.

The protein belongs to the UvrC family. Interacts with UvrB in an incision complex.

The protein localises to the cytoplasm. Its function is as follows. The UvrABC repair system catalyzes the recognition and processing of DNA lesions. UvrC both incises the 5' and 3' sides of the lesion. The N-terminal half is responsible for the 3' incision and the C-terminal half is responsible for the 5' incision. In Wolbachia pipientis wMel, this protein is UvrABC system protein C.